We begin with the raw amino-acid sequence, 181 residues long: Lysozyme A (181 aa).

An N-terminal signal peptide occupies residues 1-19 (MRIAFFLLVLAVIIGFAYG). Positions 139-181 (LTDSRPLGPFNVTESEMAQLFIDHEIAMAQCEAEKTCNGFDLE) are excised as a propeptide.

The protein belongs to the dictyostelium lysozyme family. Contains six disulfide bonds.

Its subcellular location is the cytoplasmic vesicle lumen. It carries out the reaction Hydrolysis of 1,4-beta-linkages between N-acetylmuramic acid and N-acetyl-D-glucosamine residues in a peptidoglycan.. In terms of biological role, has antibacterial activity against the Gram-positive bacteria B.subtilis, B.megaterium and M.luteus. No antibacterial activity detected against the Gram-positive bacterium S.aureus or against the Gram-negative bacterium E.coli. Lacks chitinase activity. The sequence is that of Lysozyme A from Dictyostelium discoideum (Social amoeba).